The sequence spans 229 residues: Potassium/proton antiporter CemA (229 aa).

3 helical membrane-spanning segments follow: residues 7–27, 106–126, and 189–209; these read FLPL…SLSF, MILH…YSIL, and IISG…KYWI.

This sequence belongs to the CemA family.

Its subcellular location is the plastid. It localises to the chloroplast inner membrane. It catalyses the reaction K(+)(in) + H(+)(out) = K(+)(out) + H(+)(in). In terms of biological role, contributes to K(+)/H(+) antiport activity by supporting proton efflux to control proton extrusion and homeostasis in chloroplasts in a light-dependent manner to modulate photosynthesis. Prevents excessive induction of non-photochemical quenching (NPQ) under continuous-light conditions. Indirectly promotes efficient inorganic carbon uptake into chloroplasts. The protein is Potassium/proton antiporter CemA of Eucalyptus globulus subsp. globulus (Tasmanian blue gum).